The primary structure comprises 345 residues: Fructose-bisphosphate aldolase, plasmid (345 aa).

S50 provides a ligand contact to D-glyceraldehyde 3-phosphate. The active-site Proton donor is D83. Zn(2+) contacts are provided by H84, D105, E142, and H198. G199 is a binding site for dihydroxyacetone phosphate. A Zn(2+)-binding site is contributed by H232. Residues 233–235 (GSS) and 275–278 (NIDT) contribute to the dihydroxyacetone phosphate site.

The protein belongs to the class II fructose-bisphosphate aldolase family. In terms of assembly, homodimer. Zn(2+) serves as cofactor.

The catalysed reaction is beta-D-fructose 1,6-bisphosphate = D-glyceraldehyde 3-phosphate + dihydroxyacetone phosphate. It functions in the pathway carbohydrate biosynthesis; Calvin cycle. The protein operates within carbohydrate degradation; glycolysis; D-glyceraldehyde 3-phosphate and glycerone phosphate from D-glucose: step 4/4. Its function is as follows. Catalyzes the aldol condensation of dihydroxyacetone phosphate (DHAP or glycerone-phosphate) with glyceraldehyde 3-phosphate (G3P) to form fructose 1,6-bisphosphate (FBP) in gluconeogenesis and the reverse reaction in glycolysis. This Cupriavidus necator (strain ATCC 17699 / DSM 428 / KCTC 22496 / NCIMB 10442 / H16 / Stanier 337) (Ralstonia eutropha) protein is Fructose-bisphosphate aldolase, plasmid (cbbAP).